The chain runs to 932 residues: Protein translocase subunit SecA (932 aa).

ATP is bound by residues glutamine 86, 104–108 (GEGKT), and aspartate 494. Residues 857-932 (EDAGAEAHAS…KPAPKRKKRR (76 aa)) form a disordered region. The segment covering 905–915 (TAGSAGDSNLP) has biased composition (polar residues). The segment covering 920–932 (KTNKPAPKRKKRR) has biased composition (basic residues).

The protein belongs to the SecA family. In terms of assembly, monomer and homodimer. Part of the essential Sec protein translocation apparatus which comprises SecA, SecYEG and auxiliary proteins SecDF. Other proteins may also be involved.

It localises to the cell membrane. The protein resides in the cytoplasm. It carries out the reaction ATP + H2O + cellular proteinSide 1 = ADP + phosphate + cellular proteinSide 2.. Its function is as follows. Part of the Sec protein translocase complex. Interacts with the SecYEG preprotein conducting channel. Has a central role in coupling the hydrolysis of ATP to the transfer of proteins into and across the cell membrane, serving as an ATP-driven molecular motor driving the stepwise translocation of polypeptide chains across the membrane. This chain is Protein translocase subunit SecA, found in Renibacterium salmoninarum (strain ATCC 33209 / DSM 20767 / JCM 11484 / NBRC 15589 / NCIMB 2235).